Here is a 150-residue protein sequence, read N- to C-terminus: 6,7-dimethyl-8-ribityllumazine synthase (150 aa).

Residues Phe11, 43-45 (VYD), and 67-69 (AVI) each bind 5-amino-6-(D-ribitylamino)uracil. Residue 72–73 (AT) coordinates (2S)-2-hydroxy-3-oxobutyl phosphate. His75 (proton donor) is an active-site residue. A 5-amino-6-(D-ribitylamino)uracil-binding site is contributed by Leu100. Residue Arg115 coordinates (2S)-2-hydroxy-3-oxobutyl phosphate.

The protein belongs to the DMRL synthase family.

The catalysed reaction is (2S)-2-hydroxy-3-oxobutyl phosphate + 5-amino-6-(D-ribitylamino)uracil = 6,7-dimethyl-8-(1-D-ribityl)lumazine + phosphate + 2 H2O + H(+). Its pathway is cofactor biosynthesis; riboflavin biosynthesis; riboflavin from 2-hydroxy-3-oxobutyl phosphate and 5-amino-6-(D-ribitylamino)uracil: step 1/2. Its function is as follows. Catalyzes the formation of 6,7-dimethyl-8-ribityllumazine by condensation of 5-amino-6-(D-ribitylamino)uracil with 3,4-dihydroxy-2-butanone 4-phosphate. This is the penultimate step in the biosynthesis of riboflavin. In Pyrobaculum aerophilum (strain ATCC 51768 / DSM 7523 / JCM 9630 / CIP 104966 / NBRC 100827 / IM2), this protein is 6,7-dimethyl-8-ribityllumazine synthase.